A 55-amino-acid chain; its full sequence is Large ribosomal subunit protein bL33 (55 aa).

This sequence belongs to the bacterial ribosomal protein bL33 family.

The chain is Large ribosomal subunit protein bL33 (rpmG) from Buchnera aphidicola subsp. Acyrthosiphon pisum (strain APS) (Acyrthosiphon pisum symbiotic bacterium).